A 423-amino-acid chain; its full sequence is uncharacterized protein (423 aa).

Belongs to the asfivirus E423R family.

The protein resides in the virion. This is an uncharacterized protein from African swine fever virus (isolate Tick/South Africa/Pretoriuskop Pr4/1996) (ASFV).